A 515-amino-acid polypeptide reads, in one-letter code: ATP synthase subunit alpha (515 aa).

Position 171 to 178 (171 to 178 (GDRQTGKT)) interacts with ATP.

Belongs to the ATPase alpha/beta chains family. In terms of assembly, F-type ATPases have 2 components, CF(1) - the catalytic core - and CF(0) - the membrane proton channel. CF(1) has five subunits: alpha(3), beta(3), gamma(1), delta(1), epsilon(1). CF(0) has three main subunits: a(1), b(2) and c(9-12). The alpha and beta chains form an alternating ring which encloses part of the gamma chain. CF(1) is attached to CF(0) by a central stalk formed by the gamma and epsilon chains, while a peripheral stalk is formed by the delta and b chains.

The protein resides in the cell inner membrane. The catalysed reaction is ATP + H2O + 4 H(+)(in) = ADP + phosphate + 5 H(+)(out). Functionally, produces ATP from ADP in the presence of a proton gradient across the membrane. The alpha chain is a regulatory subunit. The sequence is that of ATP synthase subunit alpha from Xylella fastidiosa (strain 9a5c).